The following is a 73-amino-acid chain: Small proline-rich protein 2G (73 aa).

The segment covering 1–11 has biased composition (low complexity); that stretch reads MSYQQQQCKQP. The interval 1–20 is disordered; it reads MSYQQQQCKQPCQPPPVCPT. A run of 3 repeats spans residues 21-29, 30-38, and 39-47. The tract at residues 21–47 is 3 X 9 AA approximate tandem repeats; that stretch reads PKCPEPCPPPKCPEPYLPPPCPPEHCP.

The protein belongs to the cornifin (SPRR) family.

The protein resides in the cytoplasm. Cross-linked envelope protein of keratinocytes. It is a keratinocyte protein that first appears in the cell cytosol, but ultimately becomes cross-linked to membrane proteins by transglutaminase. All that results in the formation of an insoluble envelope beneath the plasma membrane. The chain is Small proline-rich protein 2G (SPRR2G) from Homo sapiens (Human).